A 220-amino-acid polypeptide reads, in one-letter code: uncharacterized protein (220 aa).

This is an uncharacterized protein from Mycoplasma pneumoniae (strain ATCC 29342 / M129 / Subtype 1) (Mycoplasmoides pneumoniae).